A 138-amino-acid polypeptide reads, in one-letter code: Small ribosomal subunit protein uS11 (138 aa).

Residues 1–12 (MPPKKAAASSAK) are compositionally biased toward low complexity. Residues 1-28 (MPPKKAAASSAKKGQKTRRREKKNVPHG) are disordered. The span at 13 to 22 (KGQKTRRREK) shows a compositional bias: basic residues.

It belongs to the universal ribosomal protein uS11 family. Part of the 30S ribosomal subunit. Interacts with proteins S7 and S18. Binds to IF-3.

Its function is as follows. Located on the platform of the 30S subunit, it bridges several disparate RNA helices of the 16S rRNA. Forms part of the Shine-Dalgarno cleft in the 70S ribosome. In Mycobacterium sp. (strain JLS), this protein is Small ribosomal subunit protein uS11.